Here is a 335-residue protein sequence, read N- to C-terminus: Pro-cathepsin H (335 aa).

A signal peptide spans 1–22; it reads MWAVLPLLCAGAWLLGAPACGA. Residues 23 to 97 constitute a propeptide, activation peptide; that stretch reads AELAANSLEK…DELKRKYLWS (75 aa). N-linked (GlcNAc...) asparagine glycosylation is found at N72 and N101. 4 disulfides stabilise this stretch: C102–C327, C138–C181, C172–C214, and C272–C322. A propeptide spanning residues 106–115 is cleaved from the precursor; it reads KSNYLRGTGP. The active site involves C141. N-linked (GlcNAc...) asparagine glycosylation occurs at N230. Catalysis depends on residues H281 and N301.

This sequence belongs to the peptidase C1 family. As to quaternary structure, composed of a mini chain and a large chain. The large chain may be split into heavy and light chain. All chains are held together by disulfide bonds.

The protein localises to the lysosome. The catalysed reaction is Hydrolysis of proteins, acting as an aminopeptidase (notably, cleaving Arg-|-Xaa bonds) as well as an endopeptidase.. Its function is as follows. Important for the overall degradation of proteins in lysosomes. In Bos taurus (Bovine), this protein is Pro-cathepsin H (CTSH).